A 432-amino-acid chain; its full sequence is Gamma-glutamyl phosphate reductase (432 aa).

Belongs to the gamma-glutamyl phosphate reductase family.

The protein localises to the cytoplasm. It catalyses the reaction L-glutamate 5-semialdehyde + phosphate + NADP(+) = L-glutamyl 5-phosphate + NADPH + H(+). Its pathway is amino-acid biosynthesis; L-proline biosynthesis; L-glutamate 5-semialdehyde from L-glutamate: step 2/2. In terms of biological role, catalyzes the NADPH-dependent reduction of L-glutamate 5-phosphate into L-glutamate 5-semialdehyde and phosphate. The product spontaneously undergoes cyclization to form 1-pyrroline-5-carboxylate. The polypeptide is Gamma-glutamyl phosphate reductase (Brachyspira hyodysenteriae (strain ATCC 49526 / WA1)).